We begin with the raw amino-acid sequence, 293 residues long: Ribosomal protein L11 methyltransferase (293 aa).

4 residues coordinate S-adenosyl-L-methionine: T145, G166, D188, and N230.

The protein belongs to the methyltransferase superfamily. PrmA family.

Its subcellular location is the cytoplasm. It carries out the reaction L-lysyl-[protein] + 3 S-adenosyl-L-methionine = N(6),N(6),N(6)-trimethyl-L-lysyl-[protein] + 3 S-adenosyl-L-homocysteine + 3 H(+). In terms of biological role, methylates ribosomal protein L11. This is Ribosomal protein L11 methyltransferase from Escherichia coli O81 (strain ED1a).